Consider the following 185-residue polypeptide: GTP cyclohydrolase 1 (185 aa).

The Zn(2+) site is built by cysteine 76, histidine 79, and cysteine 147.

This sequence belongs to the GTP cyclohydrolase I family. Toroid-shaped homodecamer, composed of two pentamers of five dimers.

It catalyses the reaction GTP + H2O = 7,8-dihydroneopterin 3'-triphosphate + formate + H(+). The protein operates within cofactor biosynthesis; 7,8-dihydroneopterin triphosphate biosynthesis; 7,8-dihydroneopterin triphosphate from GTP: step 1/1. The polypeptide is GTP cyclohydrolase 1 (Clostridium perfringens (strain 13 / Type A)).